Here is a 621-residue protein sequence, read N- to C-terminus: tRNA uridine 5-carboxymethylaminomethyl modification enzyme MnmG (621 aa).

8–13 serves as a coordination point for FAD; that stretch reads GAGHAG. 269 to 283 lines the NAD(+) pocket; the sequence is GPRYCPSVEDKIFRF.

This sequence belongs to the MnmG family. As to quaternary structure, homodimer. Heterotetramer of two MnmE and two MnmG subunits. Requires FAD as cofactor.

It localises to the cytoplasm. NAD-binding protein involved in the addition of a carboxymethylaminomethyl (cmnm) group at the wobble position (U34) of certain tRNAs, forming tRNA-cmnm(5)s(2)U34. The sequence is that of tRNA uridine 5-carboxymethylaminomethyl modification enzyme MnmG from Chlorobium phaeobacteroides (strain DSM 266 / SMG 266 / 2430).